Reading from the N-terminus, the 530-residue chain is Glutamate--cysteine ligase (530 aa).

The protein belongs to the glutamate--cysteine ligase type 1 family. Type 1 subfamily.

The enzyme catalyses L-cysteine + L-glutamate + ATP = gamma-L-glutamyl-L-cysteine + ADP + phosphate + H(+). The protein operates within sulfur metabolism; glutathione biosynthesis; glutathione from L-cysteine and L-glutamate: step 1/2. This chain is Glutamate--cysteine ligase, found in Azotobacter vinelandii (strain DJ / ATCC BAA-1303).